Reading from the N-terminus, the 359-residue chain is Peptide chain release factor 1 (359 aa).

The residue at position 233 (Q233) is an N5-methylglutamine.

Belongs to the prokaryotic/mitochondrial release factor family. In terms of processing, methylated by PrmC. Methylation increases the termination efficiency of RF1.

Its subcellular location is the cytoplasm. In terms of biological role, peptide chain release factor 1 directs the termination of translation in response to the peptide chain termination codons UAG and UAA. The chain is Peptide chain release factor 1 from Ruminiclostridium cellulolyticum (strain ATCC 35319 / DSM 5812 / JCM 6584 / H10) (Clostridium cellulolyticum).